The sequence spans 146 residues: MTTTTPQRIGGWLLGPLAWLLVALLSTTLALLLYTAALSSPQTFQTLGGQALTTQILWGVSFITAIALWYYTLWLTIAFFKRRRCVPKHYIIWLLISVLLAVKAFAFSPVEDGIAVRQLLFTLLATALIVPYFKRSSRVKATFVNP.

The Cytoplasmic portion of the chain corresponds to 1 to 12; it reads MTTTTPQRIGGW. Residues 13 to 33 traverse the membrane as a helical segment; that stretch reads LLGPLAWLLVALLSTTLALLL. The Periplasmic portion of the chain corresponds to 34 to 59; the sequence is YTAALSSPQTFQTLGGQALTTQILWG. The helical transmembrane segment at 60–80 threads the bilayer; that stretch reads VSFITAIALWYYTLWLTIAFF. Residues 81 to 89 lie on the Cytoplasmic side of the membrane; the sequence is KRRRCVPKH. The chain crosses the membrane as a helical span at residues 90–110; the sequence is YIIWLLISVLLAVKAFAFSPV. Residues 111 to 112 lie on the Periplasmic side of the membrane; it reads ED. A helical transmembrane segment spans residues 113-133; the sequence is GIAVRQLLFTLLATALIVPYF. At 134 to 146 the chain is on the cytoplasmic side; it reads KRSSRVKATFVNP.

To Synechocystis PCC 6803 sll0481.

It localises to the cell inner membrane. The protein is Inner membrane protein YdgK (ydgK) of Escherichia coli (strain K12).